The sequence spans 258 residues: Global transcriptional regulator CodY (258 aa).

Positions 1–156 (MSTLLSKTRR…SATIVGMELL (156 aa)) are GAF domain. A DNA-binding region (H-T-H motif) is located at residues 204–223 (ASKIADKVGITRSVIVNALR).

It belongs to the CodY family.

The protein resides in the cytoplasm. In terms of biological role, DNA-binding global transcriptional regulator which is involved in the adaptive response to starvation and acts by directly or indirectly controlling the expression of numerous genes in response to nutrient availability. During rapid exponential growth, CodY is highly active and represses genes whose products allow adaptation to nutrient depletion. This is Global transcriptional regulator CodY from Clostridium perfringens (strain SM101 / Type A).